The primary structure comprises 882 residues: Protein translocase subunit SecA (882 aa).

ATP-binding positions include glutamine 79, 97 to 101 (GEGKT), and aspartate 487.

Belongs to the SecA family.

The protein localises to the plastid. It is found in the chloroplast stroma. The protein resides in the chloroplast thylakoid membrane. It catalyses the reaction ATP + H2O + cellular proteinSide 1 = ADP + phosphate + cellular proteinSide 2.. Its function is as follows. Has a central role in coupling the hydrolysis of ATP to the transfer of proteins across the thylakoid membrane. This Gracilaria tenuistipitata var. liui (Red alga) protein is Protein translocase subunit SecA.